Reading from the N-terminus, the 820-residue chain is Phenylalanine--tRNA ligase beta subunit (820 aa).

One can recognise a tRNA-binding domain in the interval 42–154 (KGGLEGLVIG…EDAVPGTLAK (113 aa)). One can recognise a B5 domain in the interval 413–489 (AQDFIVELTY…RIYGYNNVEI (77 aa)). Mg(2+) is bound by residues D467, D473, E476, and D477. In terms of domain architecture, FDX-ACB spans 727 to 820 (SKFPAVKRDL…LEDKLGAKLR (94 aa)).

Belongs to the phenylalanyl-tRNA synthetase beta subunit family. Type 1 subfamily. Tetramer of two alpha and two beta subunits. Mg(2+) is required as a cofactor.

It localises to the cytoplasm. The catalysed reaction is tRNA(Phe) + L-phenylalanine + ATP = L-phenylalanyl-tRNA(Phe) + AMP + diphosphate + H(+). The sequence is that of Phenylalanine--tRNA ligase beta subunit from Bacteroides fragilis (strain ATCC 25285 / DSM 2151 / CCUG 4856 / JCM 11019 / LMG 10263 / NCTC 9343 / Onslow / VPI 2553 / EN-2).